The following is a 259-amino-acid chain: Pimeloyl-[acyl-carrier protein] methyl ester esterase (259 aa).

An AB hydrolase-1 domain is found at 15–242; sequence HLVLLHGWGL…AAHAPFISHP (228 aa). Substrate is bound by residues W22, 82-83, and 143-147; these read SL and FLALQ. Catalysis depends on S82, which acts as the Nucleophile. Active-site residues include D207 and H235. Substrate is bound at residue H235.

Belongs to the AB hydrolase superfamily. Carboxylesterase BioH family. In terms of assembly, monomer.

It is found in the cytoplasm. It carries out the reaction 6-carboxyhexanoyl-[ACP] methyl ester + H2O = 6-carboxyhexanoyl-[ACP] + methanol + H(+). It participates in cofactor biosynthesis; biotin biosynthesis. Its function is as follows. The physiological role of BioH is to remove the methyl group introduced by BioC when the pimeloyl moiety is complete. It allows to synthesize pimeloyl-ACP via the fatty acid synthetic pathway through the hydrolysis of the ester bonds of pimeloyl-ACP esters. The polypeptide is Pimeloyl-[acyl-carrier protein] methyl ester esterase (Cronobacter sakazakii (strain ATCC BAA-894) (Enterobacter sakazakii)).